The chain runs to 314 residues: Protein phosphatase PTC7 homolog fig (314 aa).

The 267-residue stretch at 43-309 (PYLVTVVQGR…DDITLILSSV (267 aa)) folds into the PPM-type phosphatase domain. The Mn(2+) site is built by Asp87, Gly88, and Asp232.

Belongs to the PP2C family. Mg(2+) serves as cofactor. The cofactor is Mn(2+).

It catalyses the reaction O-phospho-L-seryl-[protein] + H2O = L-seryl-[protein] + phosphate. The enzyme catalyses O-phospho-L-threonyl-[protein] + H2O = L-threonyl-[protein] + phosphate. In Drosophila melanogaster (Fruit fly), this protein is Protein phosphatase PTC7 homolog fig.